Here is a 182-residue protein sequence, read N- to C-terminus: Glycerol-3-phosphate acyltransferase 1 (182 aa).

5 helical membrane passes run M5–V25, G54–A74, S81–F101, I117–I137, and I157–L177.

Belongs to the PlsY family. In terms of assembly, probably interacts with PlsX.

Its subcellular location is the cell membrane. The enzyme catalyses an acyl phosphate + sn-glycerol 3-phosphate = a 1-acyl-sn-glycero-3-phosphate + phosphate. Its pathway is lipid metabolism; phospholipid metabolism. In terms of biological role, catalyzes the transfer of an acyl group from acyl-phosphate (acyl-PO(4)) to glycerol-3-phosphate (G3P) to form lysophosphatidic acid (LPA). This enzyme utilizes acyl-phosphate as fatty acyl donor, but not acyl-CoA or acyl-ACP. The protein is Glycerol-3-phosphate acyltransferase 1 of Bacillus thuringiensis subsp. konkukian (strain 97-27).